We begin with the raw amino-acid sequence, 334 residues long: Hematopoietic SH2 domain-containing protein (334 aa).

One can recognise an SH2 domain in the interval 34-125 (WFHGTISREA…PFGELLTQAC (92 aa)). Disordered stretches follow at residues 157–181 (EVQR…KGEF) and 254–280 (EDSC…ATFR). The segment covering 258–267 (AATTSLQNPA) has biased composition (polar residues).

As to quaternary structure, interacts with FES and TNK2. May be phosphorylated by FES and ACK1. Predominantly expressed in spleen and thymus. Appears not to be expressed in heart, brain, liver, kidney, embryo, lung and ovary.

It localises to the cytoplasm. The protein localises to the mitochondrion. Its function is as follows. Adapter protein involved in tyrosine kinase and CD28 signaling. May be a modulator of the apoptotic response through its ability to affect mitochondrial stability. The chain is Hematopoietic SH2 domain-containing protein (Hsh2d) from Mus musculus (Mouse).